The primary structure comprises 419 residues: Zinc finger protein Pegasus (419 aa).

Lys-5 is covalently cross-linked (Glycyl lysine isopeptide (Lys-Gly) (interchain with G-Cter in SUMO2)). C2H2-type zinc fingers lie at residues 82 to 104, 110 to 132, and 138 to 161; these read LKCR…IRIH, HRCH…MRSH, and YKCE…RRKH. A Glycyl lysine isopeptide (Lys-Gly) (interchain with G-Cter in SUMO2) cross-link involves residue Lys-185. Composition is skewed to polar residues over residues 223–236 and 262–273; these read QTDS…TTPT and LSSLPPENQNPA. 2 disordered regions span residues 223-247 and 262-356; these read QTDS…QELM and LSSL…PALP. Residues 290 to 311 are compositionally biased toward low complexity; the sequence is QPSTQAVVSAVSASIPQSSSPT. Over residues 332-349 the composition is skewed to polar residues; it reads SEPSAHTSTPSIGNSQPS. 2 consecutive C2H2-type zinc fingers follow at residues 364–386 and 392–416; these read HHCQ…MGCH and FQCN…RGQH.

It belongs to the Ikaros C2H2-type zinc-finger protein family. Self-associates. Interacts with other family members; IKZF1, IKZF2, IKZF3 and IKZF4. As to expression, expressed in brain, heart, skeletal muscle, kidney, and liver. Expressed in the hematopoietic cell lines MOLT-4, NALM-6 and K-562. Highly expressed in THP-1 and M-07e cell lines, which have characteristics of myeloid and early megakaryocytic cells respectively.

The protein localises to the nucleus. Transcriptional repressor that binds the core 5'GNNTGTNG-3' DNA consensus sequence. Involved in megakaryocyte differentiation. The chain is Zinc finger protein Pegasus (IKZF5) from Homo sapiens (Human).